We begin with the raw amino-acid sequence, 331 residues long: Phosphate acyltransferase (331 aa).

It belongs to the PlsX family. Homodimer. Probably interacts with PlsY.

The protein resides in the cytoplasm. The enzyme catalyses a fatty acyl-[ACP] + phosphate = an acyl phosphate + holo-[ACP]. It functions in the pathway lipid metabolism; phospholipid metabolism. Functionally, catalyzes the reversible formation of acyl-phosphate (acyl-PO(4)) from acyl-[acyl-carrier-protein] (acyl-ACP). This enzyme utilizes acyl-ACP as fatty acyl donor, but not acyl-CoA. The protein is Phosphate acyltransferase of Exiguobacterium sibiricum (strain DSM 17290 / CCUG 55495 / CIP 109462 / JCM 13490 / 255-15).